We begin with the raw amino-acid sequence, 296 residues long: Ribosomal RNA small subunit methyltransferase A (296 aa).

Asn30, Leu32, Gly57, Glu78, Asp103, and Asn128 together coordinate S-adenosyl-L-methionine.

Belongs to the class I-like SAM-binding methyltransferase superfamily. rRNA adenine N(6)-methyltransferase family. RsmA subfamily.

Its subcellular location is the cytoplasm. It carries out the reaction adenosine(1518)/adenosine(1519) in 16S rRNA + 4 S-adenosyl-L-methionine = N(6)-dimethyladenosine(1518)/N(6)-dimethyladenosine(1519) in 16S rRNA + 4 S-adenosyl-L-homocysteine + 4 H(+). Its function is as follows. Specifically dimethylates two adjacent adenosines (A1518 and A1519) in the loop of a conserved hairpin near the 3'-end of 16S rRNA in the 30S particle. May play a critical role in biogenesis of 30S subunits. The sequence is that of Ribosomal RNA small subunit methyltransferase A from Staphylococcus haemolyticus (strain JCSC1435).